Reading from the N-terminus, the 463-residue chain is Fibrinogen beta chain (463 aa).

Positions 1 to 12 (ASVEYDNEEDSP) are enriched in acidic residues. Positions 1–56 (ASVEYDNEEDSPQIDARAHRPLDKRQEAAPTLRPVAPPISGTGYQPRPPKQDKQAM) are disordered. Y5 is subject to Sulfotyrosine. The segment covering 16–27 (ARAHRPLDKRQE) has biased composition (basic and acidic residues). Intrachain disulfides connect C205–C289 and C215–C244. One can recognise a Fibrinogen C-terminal domain in the interval 206–461 (NIPVVSGREC…KMSMKIKPYF (256 aa)). N367 is a glycosylation site (N-linked (GlcNAc...) asparagine). Ca(2+)-binding residues include D384, D386, and W388. C397 and C410 form a disulfide bridge.

As to quaternary structure, heterohexamer; disulfide linked. Contains 2 sets of 3 non-identical chains (alpha, beta and gamma). The 2 heterotrimers are in head to head conformation with the N-termini in a small central domain. In terms of processing, conversion of fibrinogen to fibrin is triggered by thrombin, which cleaves fibrinopeptides A and B from alpha and beta chains, and thus exposes the N-terminal polymerization sites responsible for the formation of the soft clot. The soft clot is converted into the hard clot by factor XIIIA which catalyzes the epsilon-(gamma-glutamyl)lysine cross-linking between gamma chains (stronger) and between alpha chains (weaker) of different monomers.

The protein resides in the secreted. In terms of biological role, cleaved by the protease thrombin to yield monomers which, together with fibrinogen alpha (FGA) and fibrinogen gamma (FGG), polymerize to form an insoluble fibrin matrix. Fibrin has a major function in hemostasis as one of the primary components of blood clots. The sequence is that of Fibrinogen beta chain (FGB) from Gallus gallus (Chicken).